Here is a 328-residue protein sequence, read N- to C-terminus: UPF0421 protein SERP1427 (328 aa).

4 consecutive transmembrane segments (helical) span residues 26–46 (LFCM…IVTI), 61–81 (LPAT…FGDQ), 109–129 (AVLT…FNFF), and 132–152 (LLTA…ILPP).

This sequence belongs to the UPF0421 family.

The protein localises to the cell membrane. This is UPF0421 protein SERP1427 from Staphylococcus epidermidis (strain ATCC 35984 / DSM 28319 / BCRC 17069 / CCUG 31568 / BM 3577 / RP62A).